Here is a 151-residue protein sequence, read N- to C-terminus: UPF0102 protein Ava_4800 (151 aa).

It belongs to the UPF0102 family.

The protein is UPF0102 protein Ava_4800 of Trichormus variabilis (strain ATCC 29413 / PCC 7937) (Anabaena variabilis).